A 142-amino-acid chain; its full sequence is Transcription antitermination protein NusB (142 aa).

Belongs to the NusB family.

In terms of biological role, involved in transcription antitermination. Required for transcription of ribosomal RNA (rRNA) genes. Binds specifically to the boxA antiterminator sequence of the ribosomal RNA (rrn) operons. The chain is Transcription antitermination protein NusB from Levilactobacillus brevis (strain ATCC 367 / BCRC 12310 / CIP 105137 / JCM 1170 / LMG 11437 / NCIMB 947 / NCTC 947) (Lactobacillus brevis).